Consider the following 369-residue polypeptide: Mitogen-activated protein kinase 5 (369 aa).

Residues Gln36 to Leu322 enclose the Protein kinase domain. ATP is bound by residues Ile42–Val50 and Lys65. Asp162 serves as the catalytic Proton acceptor. Position 194 is a phosphothreonine (Thr194). The TXY motif lies at Thr194–Tyr196. Phosphotyrosine is present on Tyr196.

It belongs to the protein kinase superfamily. CMGC Ser/Thr protein kinase family. MAP kinase subfamily. Interacts with MKK1. Dually phosphorylated on Thr-194 and Tyr-196, which activates the enzyme.

The catalysed reaction is L-seryl-[protein] + ATP = O-phospho-L-seryl-[protein] + ADP + H(+). It catalyses the reaction L-threonyl-[protein] + ATP = O-phospho-L-threonyl-[protein] + ADP + H(+). With respect to regulation, activated by threonine and tyrosine phosphorylation. Its function is as follows. Involved in disease resistance and abiotic stress tolerance signaling pathways. The polypeptide is Mitogen-activated protein kinase 5 (MPK5) (Oryza sativa subsp. indica (Rice)).